The sequence spans 415 residues: Mitogen-activated protein kinase kinae MST7 (415 aa).

The segment at 1–37 (MADPFAPRTMKRRNVKGLALTPAAPKPPPTAENAPIH) is disordered. A Protein kinase domain is found at 61–326 (LEVIKDLGSG…EELFERDPFV (266 aa)). ATP is bound by residues 67-75 (LGSGNGGTV) and K90. The tract at residues 363–409 (DLLRSSDSPTATYHGDDRPLETPTSAYRVDPRRGPAEGSAGLADQVD) is disordered.

Belongs to the protein kinase superfamily. STE Ser/Thr protein kinase family. MAP kinase kinase subfamily. Homodimer. Interacts with the adapter protein MST50. Interacts with TRX2.

The enzyme catalyses L-seryl-[protein] + ATP = O-phospho-L-seryl-[protein] + ADP + H(+). It carries out the reaction L-threonyl-[protein] + ATP = O-phospho-L-threonyl-[protein] + ADP + H(+). Its function is as follows. Mitogen-activated protein kinase kinase; part of the MST11-MST7-PMK1 MAP kinase (MAPK) cascade that is essential for appressorium formation, penetration and invasive growth. The MST11-MST7-PMK1 MAP kinase cascade transduces signals from the cell surface sensors MDB2 and SHO1 that recognize various surface signals such as surface hydrophobicity, cutin monomers, and rice leaf waxes. MST7 acts as the upstream MAPKK that directly phosphorylates MAP kinase PMK1. In Pyricularia oryzae (strain 70-15 / ATCC MYA-4617 / FGSC 8958) (Rice blast fungus), this protein is Mitogen-activated protein kinase kinae MST7.